The following is a 218-amino-acid chain: DNA ADP-ribosyl transferase (218 aa).

In terms of domain architecture, DarT spans 14–217 (ALIWRIVHRD…SVHTRSGWYF (204 aa)). NAD(+) is bound by residues 18–20 (RIV) and Arg57. Positions 41–59 (QAENWINIGNPELIGKRAG) are NAD(+)-binding element. Arg57 acts as the Proton acceptor in catalysis. The interval 123–170 (TDSHAYYNWTNYYTSLNSLDQIDWPILQARDFRRDPDDPAKFERYQAE) is ADP-ribosylating turn-turn loop. Residue Glu170 is part of the active site.

This sequence belongs to the DarT ADP-ribosyltransferase family. In terms of assembly, interacts with cognate antitoxin DarG (via C-terminus); this heterodimeric complex neutralizes the toxic effect of DarT by preventing ssDNA binding to DarT and consequently inactivating the toxin by direct protein-protein interactions.

It catalyses the reaction a thymidine in DNA + NAD(+) = an N-(ADP-alpha-D-ribosyl)-thymidine in DNA + nicotinamide + H(+). Toxic component of the hybrid type II/IV toxin-antitoxin (TA) system DarTG, which plays a crucial role in controlling bacterial growth and bacteriophage infection. ADP-ribosylates ssDNA in the sequence TTT/TCT. In case of phage infection, DarT toxin ADP-ribosylates DNA, which inhibits both viral DNA and RNA synthesis and leads to abortive infection. Its toxic effect is neutralized by cognate antitoxin DarG. May target ssDNA loops during DNA replication, probably modifies thymidine. Wild-type protein cannot be expressed at low levels in the absence of its cognate antitoxin, but a mutant protein (G49D) can be expressed, which slows growth, rapidly inhibits DNA replication, and induces RecA expression and the SOS response. The slow growth phenotype can be suppressed by cognate antitoxin DarG. Has no activity on dsDNA in vitro. In vivo ADP-ribosylates genomic DNA (gDNA). Genetic data strongly suggests ADP-ribosylation by DarT probably generates ssDNA gaps that are repaired by the RecFOR-mediated homologous recombination pathway (RuvAB, RecG) and resolved by RuvC. In some cases these gaps probably migrate into dsDNA, where they are resolved by nucleotide excision repair (NER) detected by UvrAB, excised by UvrC, removed by UvrD, and repaired by Pol I and ligase. Other pathways may also be involved in ADP-ribosylation removal from DNA. This Escherichia coli O127:H6 (strain E2348/69 / EPEC) protein is DNA ADP-ribosyl transferase.